We begin with the raw amino-acid sequence, 151 residues long: Small ribosomal subunit protein uS15z (151 aa).

It belongs to the universal ribosomal protein uS15 family.

The chain is Small ribosomal subunit protein uS15z from Oryza sativa subsp. japonica (Rice).